The sequence spans 114 residues: U17-barytoxin-Tl1d (114 aa).

The signal sequence occupies residues 1 to 20 (MKTIIVFLSLLVLATKFGDA). The propeptide occupies 21-74 (NEGVNQEQMKEVIQNEFREDFLNEMAAMSLLQQLEAIESTLLEKEADRNSRQKR). Intrachain disulfides connect C75–C88, C82–C93, and C87–C108.

Belongs to the neurotoxin 14 (magi-1) family. 03 (ICK-30-40) subfamily. As to expression, expressed by the venom gland.

The protein resides in the secreted. Its function is as follows. Ion channel inhibitor. This is U17-barytoxin-Tl1d from Trittame loki (Brush-footed trapdoor spider).